The sequence spans 387 residues: Paralemmin-1 (387 aa).

Methionine 1 is subject to N-acetylmethionine. Residues 7-104 (ETISQQERLQ…IEELENADTL (98 aa)) are a coiled coil. Disordered stretches follow at residues 22-78 (RRRQ…QEDE) and 98-133 (LENA…DRKA). 2 stretches are compositionally biased toward basic and acidic residues: residues 25 to 41 (QAEV…DRRQ) and 69 to 78 (DMRKQMQEDE). Position 116 is a phosphoserine (serine 116). Pro residues predominate over residues 116-125 (SPGPVVPAPC). A phosphothreonine mark is found at threonine 142 and threonine 146. Residue serine 163 is modified to Phosphoserine. A Phosphothreonine modification is found at threonine 244. At serine 246 the chain carries Phosphoserine. Disordered regions lie at residues 246–297 (SEAG…QEPP) and 334–378 (AAEP…DMKK). Positions 258-273 (GPSEEVVRTTPSRREI) are enriched in basic and acidic residues. Residues 286–297 (GPPGIQPGQEPP) show a composition bias toward low complexity. 2 positions are modified to phosphoserine: serine 346 and serine 369. S-palmitoyl cysteine attachment occurs at residues cysteine 381 and cysteine 383. Cysteine 384 is subject to Cysteine methyl ester. Cysteine 384 is lipidated: S-farnesyl cysteine. Residues 385–387 (SIM) constitute a propeptide, removed in mature form.

This sequence belongs to the paralemmin family. Interacts with dopamine receptor DRD3. Post-translationally, phosphorylated.

Its subcellular location is the cell membrane. It is found in the cell projection. The protein localises to the filopodium membrane. The protein resides in the axon. It localises to the dendrite. Its subcellular location is the dendritic spine. It is found in the basolateral cell membrane. The protein localises to the apicolateral cell membrane. Its function is as follows. Involved in plasma membrane dynamics and cell process formation. Necessary for axonal and dendritic filopodia induction, for dendritic spine maturation and synapse formation in a palmitoylation-dependent manner. This chain is Paralemmin-1 (PALM), found in Sus scrofa (Pig).